We begin with the raw amino-acid sequence, 282 residues long: Nucleotide-binding protein Shew_3314 (282 aa).

Residue 8 to 15 coordinates ATP; sequence GRSGSGKS. GTP is bound at residue 56–59; sequence DVRN.

This sequence belongs to the RapZ-like family.

In terms of biological role, displays ATPase and GTPase activities. This is Nucleotide-binding protein Shew_3314 from Shewanella loihica (strain ATCC BAA-1088 / PV-4).